The sequence spans 489 residues: UDP-N-acetylmuramate--L-alanine ligase (489 aa).

ATP is bound at residue 128–134 (GTHGKTT).

The protein belongs to the MurCDEF family.

It localises to the cytoplasm. It catalyses the reaction UDP-N-acetyl-alpha-D-muramate + L-alanine + ATP = UDP-N-acetyl-alpha-D-muramoyl-L-alanine + ADP + phosphate + H(+). The protein operates within cell wall biogenesis; peptidoglycan biosynthesis. In terms of biological role, cell wall formation. This is UDP-N-acetylmuramate--L-alanine ligase from Shewanella woodyi (strain ATCC 51908 / MS32).